Here is a 92-residue protein sequence, read N- to C-terminus: Cell division protein FtsB (92 aa).

Over 1–3 (MKV) the chain is Cytoplasmic. The helical transmembrane segment at 4–21 (VPILLFVLLAALQYRLWF) threads the bilayer. Residues 22–92 (GKNSIPEYVA…TFYRILPSEE (71 aa)) are Periplasmic-facing. Positions 31 to 74 (AMEKSVAEQAEQNTELLQRNNLLKADIQDLKVGLEAVEERARNE) form a coiled coil.

It belongs to the FtsB family. In terms of assembly, part of a complex composed of FtsB, FtsL and FtsQ.

Its subcellular location is the cell inner membrane. In terms of biological role, essential cell division protein. May link together the upstream cell division proteins, which are predominantly cytoplasmic, with the downstream cell division proteins, which are predominantly periplasmic. The sequence is that of Cell division protein FtsB from Pseudoalteromonas atlantica (strain T6c / ATCC BAA-1087).